Here is a 392-residue protein sequence, read N- to C-terminus: Methylthioribose kinase (392 aa).

ATP-binding positions include asparagine 38, lysine 53, and 107–109; that span reads EDL. Aspartate 225 is a binding site for substrate. 242–244 serves as a coordination point for ATP; that stretch reads DPE. A substrate-binding site is contributed by arginine 332.

It belongs to the methylthioribose kinase family. In terms of assembly, homodimer.

It carries out the reaction 5-(methylsulfanyl)-D-ribose + ATP = 5-(methylsulfanyl)-alpha-D-ribose 1-phosphate + ADP + H(+). The protein operates within amino-acid biosynthesis; L-methionine biosynthesis via salvage pathway; S-methyl-5-thio-alpha-D-ribose 1-phosphate from S-methyl-5'-thioadenosine (hydrolase route): step 2/2. In terms of biological role, catalyzes the phosphorylation of methylthioribose into methylthioribose-1-phosphate. The sequence is that of Methylthioribose kinase from Bacillus mycoides (strain KBAB4) (Bacillus weihenstephanensis).